Reading from the N-terminus, the 229-residue chain is Large ribosomal subunit protein uL1c (229 aa).

Belongs to the universal ribosomal protein uL1 family. In terms of assembly, part of the 50S ribosomal subunit.

It is found in the plastid. The protein localises to the chloroplast. Its function is as follows. Binds directly to 23S rRNA. Might be involved in E site tRNA release (Potential). This chain is Large ribosomal subunit protein uL1c (rpl1), found in Pyropia yezoensis (Susabi-nori).